A 176-amino-acid chain; its full sequence is Large ribosomal subunit protein uL6 (176 aa).

This sequence belongs to the universal ribosomal protein uL6 family. In terms of assembly, part of the 50S ribosomal subunit.

Functionally, this protein binds to the 23S rRNA, and is important in its secondary structure. It is located near the subunit interface in the base of the L7/L12 stalk, and near the tRNA binding site of the peptidyltransferase center. This Burkholderia multivorans (strain ATCC 17616 / 249) protein is Large ribosomal subunit protein uL6.